Consider the following 516-residue polypeptide: Beta-glucosidase 1 (516 aa).

The signal sequence occupies residues 1–21 (MGHRLVVVLLLALLVAGAARA). Residue Q68 participates in a beta-D-glucoside binding. N-linked (GlcNAc...) asparagine glycosylation is present at N96. A beta-D-glucoside is bound by residues H169 and 214 to 215 (NE). The active-site Proton donor is the E215. A disulfide bridge connects residues C234 and C237. N290 is a glycosylation site (N-linked (GlcNAc...) asparagine). Position 353 (Y353) interacts with a beta-D-glucoside. N364 is a glycosylation site (N-linked (GlcNAc...) asparagine). Residue E424 participates in a beta-D-glucoside binding. E424 (nucleophile) is an active-site residue. Residue N432 is glycosylated (N-linked (GlcNAc...) asparagine). Residues W471, 478–479 (EW), and F487 each bind a beta-D-glucoside.

The protein belongs to the glycosyl hydrolase 1 family.

It catalyses the reaction Hydrolysis of terminal, non-reducing beta-D-glucosyl residues with release of beta-D-glucose.. The chain is Beta-glucosidase 1 (BGLU1) from Oryza sativa subsp. japonica (Rice).